The primary structure comprises 274 residues: Large ribosomal subunit protein uL2 (274 aa).

Disordered stretches follow at residues 28 to 54 and 224 to 274; these read APHA…TRHI and VAMN…RRRK. Positions 263–274 are enriched in basic and acidic residues; that stretch reads KRTDKMIVRRRK.

It belongs to the universal ribosomal protein uL2 family. In terms of assembly, part of the 50S ribosomal subunit. Forms a bridge to the 30S subunit in the 70S ribosome.

One of the primary rRNA binding proteins. Required for association of the 30S and 50S subunits to form the 70S ribosome, for tRNA binding and peptide bond formation. It has been suggested to have peptidyltransferase activity; this is somewhat controversial. Makes several contacts with the 16S rRNA in the 70S ribosome. This chain is Large ribosomal subunit protein uL2, found in Pseudomonas savastanoi pv. phaseolicola (strain 1448A / Race 6) (Pseudomonas syringae pv. phaseolicola (strain 1448A / Race 6)).